The chain runs to 510 residues: NAD(P)H-quinone oxidoreductase subunit 2 B, chloroplastic (510 aa).

Transmembrane regions (helical) follow at residues 24-44 (LLLF…GLIL), 57-77 (IPWL…ALLF), 99-119 (IFQF…VEYI), 124-144 (MAIA…MFLC), 149-169 (LITI…LSGY), 183-203 (YLLM…WLYG), 227-247 (PGIS…LSPA), 295-315 (WHLL…LIAI), 323-343 (MLAY…IVGN), 354-374 (YMLF…LFGL), 395-415 (ALSL…AGFF), 418-438 (LHLF…IGLL), and 484-504 (MIVC…IIAI).

It belongs to the complex I subunit 2 family. NDH is composed of at least 16 different subunits, 5 of which are encoded in the nucleus.

The protein resides in the plastid. The protein localises to the chloroplast thylakoid membrane. It catalyses the reaction a plastoquinone + NADH + (n+1) H(+)(in) = a plastoquinol + NAD(+) + n H(+)(out). It carries out the reaction a plastoquinone + NADPH + (n+1) H(+)(in) = a plastoquinol + NADP(+) + n H(+)(out). In terms of biological role, NDH shuttles electrons from NAD(P)H:plastoquinone, via FMN and iron-sulfur (Fe-S) centers, to quinones in the photosynthetic chain and possibly in a chloroplast respiratory chain. The immediate electron acceptor for the enzyme in this species is believed to be plastoquinone. Couples the redox reaction to proton translocation, and thus conserves the redox energy in a proton gradient. The sequence is that of NAD(P)H-quinone oxidoreductase subunit 2 B, chloroplastic from Gossypium barbadense (Sea Island cotton).